We begin with the raw amino-acid sequence, 199 residues long: MARCKS-related protein (199 aa).

The disordered stretch occupies residues 1 to 199 (MGSQSSKAPR…GPASASAENE (199 aa)). The N-myristoyl glycine moiety is linked to residue glycine 2. The residue at position 14 (threonine 14) is a Phosphothreonine. Over residues 16–26 (EEAAGASPAKA) the composition is skewed to low complexity. 3 positions are modified to phosphoserine: serine 22, serine 36, and serine 48. The segment covering 53–64 (GADEAAGATGDA) has biased composition (low complexity). Serine 71 is modified (phosphoserine). The segment covering 74-85 (AEAKGEVAPKET) has biased composition (basic and acidic residues). Threonine 85 is modified (phosphothreonine). Over residues 86-98 (PKKKKKFSFKKPF) the composition is skewed to basic residues. The effector domain involved in lipid-binding and calmodulin-binding stretch occupies residues 87-110 (KKKKKFSFKKPFKLSGLSFKRNRK). Phosphoserine; by PKC is present on residues serine 93, serine 101, and serine 104. Serine 119 bears the Phosphoserine mark. Serine 120 is modified (phosphoserine; by MAPK8). A phosphoserine mark is found at serine 132 and serine 135. Threonine 148 carries the post-translational modification Phosphothreonine; by MAPK8. A phosphoserine mark is found at serine 151, serine 162, and serine 165. Low complexity predominate over residues 175-199 (GPQAAEPSTPSGPESGPASASAENE). Threonine 183 carries the post-translational modification Phosphothreonine; by MAPK8.

Belongs to the MARCKS family. In terms of assembly, binds to filamentous actin (F-actin), but not to monomeric G-actin, independently of its phosphorylation status. Interacts with calmodulin. Post-translationally, phosphorylated. Phosphorylation at Ser-120 and Thr-183 is non-redundantly catalyzed by MAPK8 in vivo. Phosphorylation at Thr-148 is preferentially catalyzed by MAPK8 in vivo, but this modification can also be catalyzed by other kinases in the absence of MAPK8. May be phosphorylated by protein kinase C, which disrupts the interaction with calmodulin.

The protein localises to the cytoplasm. It is found in the cytoskeleton. The protein resides in the cell membrane. Controls cell movement by regulating actin cytoskeleton homeostasis and filopodium and lamellipodium formation. When unphosphorylated, induces cell migration. When phosphorylated by MAPK8, induces actin bundles formation and stabilization, thereby reducing actin plasticity, hence restricting cell movement, including neuronal migration. May be involved in coupling the protein kinase C and calmodulin signal transduction systems. The sequence is that of MARCKS-related protein (Marcksl1) from Rattus norvegicus (Rat).